A 326-amino-acid chain; its full sequence is Protein farnesyltransferase/geranylgeranyltransferase type-1 subunit alpha (326 aa).

5 PFTA repeats span residues Arg-55–His-89, Asp-90–Pro-124, Val-126–Gly-160, Trp-161–Leu-194, and Met-201–Glu-235.

This sequence belongs to the protein prenyltransferase subunit alpha family. As to quaternary structure, heterodimer of an alpha and a beta subunit. The cofactor is Mg(2+).

The catalysed reaction is L-cysteinyl-[protein] + (2E,6E)-farnesyl diphosphate = S-(2E,6E)-farnesyl-L-cysteinyl-[protein] + diphosphate. The enzyme catalyses geranylgeranyl diphosphate + L-cysteinyl-[protein] = S-geranylgeranyl-L-cysteinyl-[protein] + diphosphate. Its function is as follows. Essential subunit of both the farnesyltransferase and the geranylgeranyltransferase complex. Contributes to the transfer of a farnesyl or geranylgeranyl moiety from farnesyl or geranylgeranyl diphosphate to a cysteine at the fourth position from the C-terminus of several proteins having the C-terminal sequence Cys-aliphatic-aliphatic-X. This chain is Protein farnesyltransferase/geranylgeranyltransferase type-1 subunit alpha (FTA), found in Arabidopsis thaliana (Mouse-ear cress).